The following is a 383-amino-acid chain: Protein RecA (383 aa).

Gly-79–Thr-86 serves as a coordination point for ATP.

The protein belongs to the RecA family.

It is found in the cytoplasm. In terms of biological role, can catalyze the hydrolysis of ATP in the presence of single-stranded DNA, the ATP-dependent uptake of single-stranded DNA by duplex DNA, and the ATP-dependent hybridization of homologous single-stranded DNAs. It interacts with LexA causing its activation and leading to its autocatalytic cleavage. The chain is Protein RecA from Streptococcus gordonii (strain Challis / ATCC 35105 / BCRC 15272 / CH1 / DL1 / V288).